The following is a 207-amino-acid chain: Succinyl-CoA:3-ketoacid coenzyme A transferase subunit B (207 aa).

E43 is an active-site residue.

Belongs to the 3-oxoacid CoA-transferase subunit B family. As to quaternary structure, heterodimer of a subunit A and a subunit B.

The enzyme catalyses a 3-oxo acid + succinyl-CoA = a 3-oxoacyl-CoA + succinate. This Helicobacter pylori (strain ATCC 700392 / 26695) (Campylobacter pylori) protein is Succinyl-CoA:3-ketoacid coenzyme A transferase subunit B (scoB).